The primary structure comprises 172 residues: Ly6/PLAUR domain-containing protein 6B (172 aa).

Residues 1 to 25 (MLLLCHILAVTILQILIISENWVFA) form the signal peptide. The UPAR/Ly6 domain occupies 46 to 137 (FKCFTCENAG…VELPTNHTNA (92 aa)). Residues 46 to 140 (FKCFTCENAG…PTNHTNAVFA (95 aa)) are sufficient for inhibiting alpha-7 nAChR currents. Disulfide bonds link cysteine 48–cysteine 76, cysteine 51–cysteine 60, cysteine 69–cysteine 95, cysteine 101–cysteine 120, cysteine 106–cysteine 117, and cysteine 121–cysteine 126. Residue serine 148 is the site of GPI-anchor amidated serine attachment. A propeptide spans 149 to 172 (GSSVSSVPSPYLLVLAWLFMLPLL) (removed in mature form).

It is found in the cell membrane. Functionally, likely acts as a modulator of nicotinic acetylcholine receptors (nAChRs) activity. In vitro acts on nAChRs in a subtype- and stoichiometry-dependent manner. Modulates specifically alpha-3(3):beta-4(2) nAChRs by enhancing the sensitivity to ACh, decreasing ACh-induced maximal current response and increasing the rate of desensitization to ACh; has no effect on alpha-7 homomeric nAChRs; modulates alpha-3(2):alpha-5:beta-4(2) nAChRs in the context of CHRNA5/alpha-5 variant Asn-398 but not its wild-type sequence. However, according to another report in vitro it can weakly inhibits alpha-7 nAChRs. This chain is Ly6/PLAUR domain-containing protein 6B (Lypd6b), found in Mus musculus (Mouse).